The following is a 218-amino-acid chain: Large ribosomal subunit protein uL3 (218 aa).

The segment at 127-167 is disordered; sequence GFSRGPMSHGSKNHRLPGSIGAGTTPGRVYPGKRMAGRMGG.

This sequence belongs to the universal ribosomal protein uL3 family. As to quaternary structure, part of the 50S ribosomal subunit. Forms a cluster with proteins L14 and L19.

In terms of biological role, one of the primary rRNA binding proteins, it binds directly near the 3'-end of the 23S rRNA, where it nucleates assembly of the 50S subunit. This Prochlorococcus marinus (strain NATL1A) protein is Large ribosomal subunit protein uL3.